Consider the following 464-residue polypeptide: Alpha-amylase (464 aa).

A signal peptide spans 1–21 (MKNTAGILAIAGMLIAPLAHA). Substrate-binding residues include His-107 and Arg-213. The Nucleophile role is filled by Asp-215. Position 218–219 (218–219 (KH)) interacts with substrate. The active-site Proton donor is the Glu-242. Substrate-binding residues include Gly-247 and His-313.

Belongs to the glycosyl hydrolase 13 family.

Its subcellular location is the secreted. It carries out the reaction Endohydrolysis of (1-&gt;4)-alpha-D-glucosidic linkages in polysaccharides containing three or more (1-&gt;4)-alpha-linked D-glucose units.. This Aeromonas hydrophila protein is Alpha-amylase.